The chain runs to 151 residues: Transcriptional regulator MraZ (151 aa).

SpoVT-AbrB domains follow at residues 5–51 and 81–124; these read AHEL…PVAE and AEIL…GREQ.

Belongs to the MraZ family. Forms oligomers.

It is found in the cytoplasm. Its subcellular location is the nucleoid. In Neisseria gonorrhoeae (strain ATCC 700825 / FA 1090), this protein is Transcriptional regulator MraZ.